The chain runs to 979 residues: Translation initiation factor IF-2 (979 aa).

The span at L50 to Q77 shows a compositional bias: basic and acidic residues. A disordered region spans residues L50 to S385. The segment covering S78–V87 has biased composition (polar residues). Basic and acidic residues-rich tracts occupy residues I98–G109, E121–A142, and E149–A173. Low complexity predominate over residues E174–D192. Composition is skewed to basic and acidic residues over residues E196–T211, N219–A263, and P280–E291. Residues A317 to A327 show a composition bias toward low complexity. The span at G351–R368 shows a compositional bias: gly residues. The region spanning P479 to E646 is the tr-type G domain. The G1 stretch occupies residues G488–T495. Residue G488 to T495 coordinates GTP. Positions G513–H517 are G2. The G3 stretch occupies residues D534–G537. Residues D534–H538 and T588–D591 each bind GTP. The tract at residues T588–D591 is G4. A G5 region spans residues S624–K626.

Belongs to the TRAFAC class translation factor GTPase superfamily. Classic translation factor GTPase family. IF-2 subfamily.

The protein localises to the cytoplasm. One of the essential components for the initiation of protein synthesis. Protects formylmethionyl-tRNA from spontaneous hydrolysis and promotes its binding to the 30S ribosomal subunits. Also involved in the hydrolysis of GTP during the formation of the 70S ribosomal complex. This Cupriavidus metallidurans (strain ATCC 43123 / DSM 2839 / NBRC 102507 / CH34) (Ralstonia metallidurans) protein is Translation initiation factor IF-2.